The primary structure comprises 177 residues: FCS-Like Zinc finger 1 (177 aa).

The span at 22–46 (SLSEMEAGFSGNNNNSNNHGNPQNG) shows a compositional bias: low complexity. 2 disordered regions span residues 22–49 (SLSE…GVVS) and 134–177 (ERDE…VAAA). The FLZ-type zinc-finger motif lies at 96–140 (HFLDSCFLCKKPLGDNRDIYMYRGDTPFCSEECRQEQIERDEAKE). Composition is skewed to basic and acidic residues over residues 134-143 (ERDEAKEKKQ) and 154-168 (RRKE…RDYA).

It belongs to the FLZ family. Interacts with KIN10 and KIN11 via its FLZ-type zinc finger domain. Interacts with KINB1, KINB2 and KINB3 via its N-terminal part. Interacts with DSP3 and BBX21 via its FLZ-type zinc finger domain. Forms heterodimer with FLZ7 and FLZ15 in vitro.

It localises to the nucleus. The protein localises to the cytoplasm. May act as an adapter to facilitate the interaction of SnRK1 complex with effector proteins, conferring tissue- and stimulus-type specific differences in the SnRK1 regulation pathway. This Arabidopsis thaliana (Mouse-ear cress) protein is FCS-Like Zinc finger 1.